Here is a 397-residue protein sequence, read N- to C-terminus: Heterogeneous nuclear ribonucleoprotein K homolog (397 aa).

Residues 1–41 (MMIKVGAAINGTDSPKAMKREHDNDDGDRTGRHKRPKTDGF) are disordered. A compositionally biased stretch (basic and acidic residues) spans 16–30 (KAMKREHDNDDGDRT). 2 KH domains span residues 49 to 111 (KFEV…LKDV) and 124 to 189 (PCEV…IEEV). A disordered region spans residues 220–279 (GGFPGNMPAGGPPNNRGPAPQRGGQGPPGGPRSYGGAITQGGGQRSFEAGDFQQFRGGPG). The span at 224-241 (GNMPAGGPPNNRGPAPQR) shows a compositional bias: low complexity. The KH 3 domain occupies 316 to 379 (VTTAQVTIPS…QQIHSAQYLL (64 aa)).

As to quaternary structure, interacts with alg-1; the interaction is direct and may be strengthened through RNA-protein association. In terms of tissue distribution, expressed in gut, muscle, neuronal and hypodermal tissues. Highly expressed in the germline and oocytes.

The protein localises to the nucleus. It localises to the cytoplasm. Functionally, RNA-binding protein which functions together with alg-1, a component of the miRNA loading complex, to modulate the processing and activity of specific miRNAs such as miR-58 and let-7 to regulate gene expression at the post-transcriptional level during embryonic, hypodermal and neuronal development. Promotes the lsy-6-mediated repression of cog-1 in uterine cells. In embryos, may play a role in the DNA damage response. The sequence is that of Heterogeneous nuclear ribonucleoprotein K homolog from Caenorhabditis elegans.